The chain runs to 153 residues: Aspartate carbamoyltransferase regulatory chain (153 aa).

4 residues coordinate Zn(2+): cysteine 109, cysteine 114, cysteine 138, and cysteine 141.

The protein belongs to the PyrI family. As to quaternary structure, contains catalytic and regulatory chains. Zn(2+) is required as a cofactor.

Its function is as follows. Involved in allosteric regulation of aspartate carbamoyltransferase. This chain is Aspartate carbamoyltransferase regulatory chain, found in Cenarchaeum symbiosum (strain A).